The chain runs to 162 residues: Ribosome maturation factor RimP (162 aa).

This sequence belongs to the RimP family.

The protein localises to the cytoplasm. Required for maturation of 30S ribosomal subunits. The chain is Ribosome maturation factor RimP from Leptospira biflexa serovar Patoc (strain Patoc 1 / Ames).